The following is a 502-amino-acid chain: 2-isopropylmalate synthase (502 aa).

Asp1, His189, His191, and Asn225 together coordinate Mn(2+). Residues 1 to 254 enclose the Pyruvate carboxyltransferase domain; that stretch reads DGEQALQASL…STNINHKEIY (254 aa). Positions 379 to 502 are regulatory domain; the sequence is CLKFFSVQSI…VNKNLKNLKK (124 aa).

It belongs to the alpha-IPM synthase/homocitrate synthase family. LeuA type 1 subfamily. Homodimer. Mn(2+) is required as a cofactor.

It is found in the cytoplasm. The catalysed reaction is 3-methyl-2-oxobutanoate + acetyl-CoA + H2O = (2S)-2-isopropylmalate + CoA + H(+). The protein operates within amino-acid biosynthesis; L-leucine biosynthesis; L-leucine from 3-methyl-2-oxobutanoate: step 1/4. Functionally, catalyzes the condensation of the acetyl group of acetyl-CoA with 3-methyl-2-oxobutanoate (2-ketoisovalerate) to form 3-carboxy-3-hydroxy-4-methylpentanoate (2-isopropylmalate). The polypeptide is 2-isopropylmalate synthase (Buchnera aphidicola subsp. Uroleucon sonchi).